The primary structure comprises 327 residues: COP9 signalosome complex subunit 7 (327 aa).

In terms of domain architecture, PCI spans 4–165; the sequence is VHHRALDALQ…NPPTVNVTSV (162 aa). Disordered regions lie at residues 233–260 and 276–327; these read GGEQ…AGWK and GGSN…GKKS. A compositionally biased stretch (gly residues) spans 236-255; it reads QLQGGNPGQGQGQGQGGLGK. The segment covering 315 to 327 has biased composition (basic residues); it reads GARHSKRFLGKKS.

It belongs to the CSN7/EIF3M family. CSN7 subfamily. In terms of assembly, component of the COP9 signalosome (CSN) complex. As to expression, present in uninduced vegetative hyphae, induced conidiating cultures and in both conidiospores and ascospores.

Its subcellular location is the cytoplasm. The protein localises to the nucleus. Component of the COP9 signalosome (CSN) complex that acts as an regulator of the ubiquitin (Ubl) conjugation pathway by mediating the deneddylation of the cullin subunit of SCF-type E3 ubiquitin-protein ligase complexes. The CSN complex seems to link protein degradation to sexual development. May be required for sporulation only at elevated temperatures. This chain is COP9 signalosome complex subunit 7 (csnG), found in Emericella nidulans (strain FGSC A4 / ATCC 38163 / CBS 112.46 / NRRL 194 / M139) (Aspergillus nidulans).